The primary structure comprises 65 residues: Toxin Co52 (65 aa).

The LCN-type CS-alpha/beta domain occupies 2–65 (EDGYLVDKTG…PTWPLPNKTC (64 aa)). 4 disulfide bridges follow: Cys12–Cys65, Cys16–Cys41, Cys25–Cys46, and Cys29–Cys48.

Expressed by the venom gland.

The protein resides in the secreted. Its function is as follows. Beta toxins bind voltage-independently at site-4 of sodium channels (Nav) and shift the voltage of activation toward more negative potentials thereby affecting sodium channel activation and promoting spontaneous and repetitive firing. Not toxic to mice, chicks, crickets or woodlice (at 5 ug). The protein is Toxin Co52 of Centruroides ornatus (Scorpion).